The primary structure comprises 167 residues: Low molecular mass early light-inducible protein HV60, chloroplastic (167 aa).

A chloroplast-targeting transit peptide spans 1–33; sequence MATMMAMSSFAGAAVLPRGSARSLPALGRRTLV. Transmembrane regions (helical) follow at residues 101–121 and 145–165; these read GQAW…VPLL and FAMI…TPFI.

This sequence belongs to the ELIP/psbS family.

It is found in the plastid. The protein resides in the chloroplast membrane. Its function is as follows. Probably involved in the integration of pigments into the mature pigment-protein complexes. In Hordeum vulgare (Barley), this protein is Low molecular mass early light-inducible protein HV60, chloroplastic.